Here is a 351-residue protein sequence, read N- to C-terminus: Prohormone-2 (351 aa).

An N-terminal signal peptide occupies residues 1–21 (MMCDWVWLLLTLCSLLMIVQS). Propeptides lie at residues 22-177 (LPTN…QTQV) and 192-319 (ELDI…MISR). The segment covering 51–69 (GNQQNHQPENNPSSSYSST) has biased composition (polar residues). Disordered regions lie at residues 51–71 (GNQQNHQPENNPSSSYSSTAE) and 136–176 (NEDR…VQTQ). Basic and acidic residues predominate over residues 136 to 145 (NEDRRKRSEK). The span at 158–176 (PSTTSFQSPTSTQQSVQTQ) shows a compositional bias: low complexity.

It localises to the secreted. This chain is Prohormone-2, found in Apis mellifera (Honeybee).